The chain runs to 110 residues: Small ribosomal subunit protein bS16 (110 aa).

The interval 79–110 (AAGVKKREARNNPQKAVPRKERKAQAEAAAKG) is disordered.

It belongs to the bacterial ribosomal protein bS16 family.

The protein is Small ribosomal subunit protein bS16 of Bradyrhizobium diazoefficiens (strain JCM 10833 / BCRC 13528 / IAM 13628 / NBRC 14792 / USDA 110).